The primary structure comprises 426 residues: 3-phosphoshikimate 1-carboxyvinyltransferase (426 aa).

Positions 22, 23, and 27 each coordinate 3-phosphoshikimate. Lysine 22 serves as a coordination point for phosphoenolpyruvate. Residues glycine 96 and arginine 124 each contribute to the phosphoenolpyruvate site. Residues serine 170, serine 171, glutamine 172, serine 198, aspartate 314, asparagine 337, and lysine 341 each coordinate 3-phosphoshikimate. Glutamine 172 contributes to the phosphoenolpyruvate binding site. Aspartate 314 acts as the Proton acceptor in catalysis. Residues arginine 345, arginine 387, and lysine 412 each coordinate phosphoenolpyruvate.

It belongs to the EPSP synthase family. Monomer.

The protein resides in the cytoplasm. It carries out the reaction 3-phosphoshikimate + phosphoenolpyruvate = 5-O-(1-carboxyvinyl)-3-phosphoshikimate + phosphate. Its pathway is metabolic intermediate biosynthesis; chorismate biosynthesis; chorismate from D-erythrose 4-phosphate and phosphoenolpyruvate: step 6/7. Its function is as follows. Catalyzes the transfer of the enolpyruvyl moiety of phosphoenolpyruvate (PEP) to the 5-hydroxyl of shikimate-3-phosphate (S3P) to produce enolpyruvyl shikimate-3-phosphate and inorganic phosphate. The polypeptide is 3-phosphoshikimate 1-carboxyvinyltransferase (Shewanella baltica (strain OS185)).